We begin with the raw amino-acid sequence, 255 residues long: MYKRNERLNLIRKRVDQYGQVAVKDLAIFLQVTPETVRKDLETLENDKLITRTHGGAIQYNHINKEKSYANKWQKQSQVKERIAKKAALQIKSGEIIVIDGGTTTGRIPQYLNDITQTTIVTNSLKIADELNRAIEEQRIQAEVIMLAGKTNTEQDVVRGHMTNELLQRFKFDKAFISCGSFDTSDCYEFDLEEAHASHIMIQKSQLSYLLADSSKRDAHASYRIDGFSEIDYMISDYAKPQNIEYFNQKHWLQI.

Residues 4 to 59 (RNERLNLIRKRVDQYGQVAVKDLAIFLQVTPETVRKDLETLENDKLITRTHGGAIQ) form the HTH deoR-type domain. Positions 21-40 (VAVKDLAIFLQVTPETVRKD) form a DNA-binding region, H-T-H motif.

This is an uncharacterized protein from Staphylococcus epidermidis (strain ATCC 12228 / FDA PCI 1200).